Consider the following 310-residue polypeptide: Tagatose-6-phosphate kinase (310 aa).

Belongs to the carbohydrate kinase PfkB family. LacC subfamily.

The enzyme catalyses D-tagatofuranose 6-phosphate + ATP = D-tagatofuranose 1,6-bisphosphate + ADP + H(+). Its pathway is carbohydrate metabolism; D-tagatose 6-phosphate degradation; D-glyceraldehyde 3-phosphate and glycerone phosphate from D-tagatose 6-phosphate: step 1/2. This chain is Tagatose-6-phosphate kinase, found in Staphylococcus epidermidis (strain ATCC 35984 / DSM 28319 / BCRC 17069 / CCUG 31568 / BM 3577 / RP62A).